A 627-amino-acid chain; its full sequence is Muscarinic acetylcholine receptor gar-2 (627 aa).

Over 1-9 the chain is Extracellular; sequence MAVASVLLA. A helical transmembrane segment spans residues 10–30; sequence LFMLFLSIVTVIGNLAVLLSY. At 31–41 the chain is on the cytoplasmic side; that stretch reads YLDKNIRQPTN. The chain crosses the membrane as a helical span at residues 42–62; it reads YFIFSLAISDLLIGLEGIPVY. The Extracellular portion of the chain corresponds to 63–81; it reads TAFYLNNNEWIWGDVLCDL. The cysteines at positions 79 and 160 are disulfide-linked. A helical membrane pass occupies residues 82-102; the sequence is WLSIDYIVCLASIYTVLGITV. Topologically, residues 103 to 122 are cytoplasmic; the sequence is DRYYSVKKPATYRNWRTPGR. The chain crosses the membrane as a helical span at residues 123–143; sequence VVLIIIFIWLVPSILFSVSIF. Residues 144-172 lie on the Extracellular side of the membrane; sequence GYGTFTGTGRILKETECYVQFMTNPYLNM. Residues 173 to 193 form a helical membrane-spanning segment; sequence GMYISYYWTTLFVMLYLYWGI. At 194–549 the chain is on the cytoplasmic side; that stretch reads YRAAKKLALK…ENRARKALRT (356 aa). Disordered regions lie at residues 222–266, 423–442, and 449–475; these read VSVR…VGTP, REDENKNEEEKQKNGLENGG, and ANDEQQPSTSKESEQKEEMTPENHDPN. The segment covering 231–264 has biased composition (low complexity); the sequence is NSSSDSPNDTSNSSKCFRTAPPTTTVQTTQTNVG. A compositionally biased stretch (basic and acidic residues) spans 459 to 475; the sequence is KESEQKEEMTPENHDPN. A helical membrane pass occupies residues 550–570; it reads ITFILGSFIILWTPFYVLATI. The Extracellular segment spans residues 571–586; sequence YGFCETCKASPSFNTL. Residues 587-609 traverse the membrane as a helical segment; the sequence is YTISYYLCYMNSPLNPFCYAMAN. Over 610–627 the chain is Cytoplasmic; sequence QQFKKTLTRIFKGDFRRV.

It belongs to the G-protein coupled receptor 1 family. Muscarinic acetylcholine receptor subfamily. In terms of tissue distribution, expressed in putative sensory neurons, many cells of the ventral cord and in the HSN motor neurons. Expressed in some cholinergic motor neurons and GABAergic motor neurons, which are the two major types of ventral cord motor neurons.

The protein resides in the cell membrane. It is found in the cell projection. It localises to the axon. Functionally, the muscarinic acetylcholine receptor mediates various cellular responses, including inhibition of adenylate cyclase, breakdown of phosphoinositides and modulation of potassium channels through the action of G proteins. Primary transducing effect is Pi turnover. Regulates the activity of ventral cord motor neurons. Couples to the G(o)-alpha G-protein subunit goa-1 to negatively regulate cholinergic receptor activity in the presence of high levels of the neurotransmitter acetylcholine in ventral cord motor neurons. As acetylcholine depolarizes body wall muscles, modulation of acetylcholine levels most likely results in the control locomotory behavior and egg-laying. The sequence is that of Muscarinic acetylcholine receptor gar-2 from Caenorhabditis elegans.